Consider the following 76-residue polypeptide: Small proline-rich protein 2I (76 aa).

Repeat copies occupy residues 21–29 (KKCPEPCPP), 30–38 (PQCPEPCPP), and 39–47 (PKCPEPCPE). The interval 21–47 (KKCPEPCPPPQCPEPCPPPKCPEPCPE) is 3 X 9 AA approximate tandem repeats. The segment covering 40 to 53 (KCPEPCPESCPPPS) has biased composition (pro residues). Positions 40–76 (KCPEPCPESCPPPSYQQKCPPVQPPPPCQQKCPPKSK) are disordered.

Belongs to the cornifin (SPRR) family. In terms of tissue distribution, not expressed in uterus.

Its subcellular location is the cytoplasm. Functionally, cross-linked envelope protein of keratinocytes. It is a keratinocyte protein that first appears in the cell cytosol, but ultimately becomes cross-linked to membrane proteins by transglutaminase. All that results in the formation of an insoluble envelope beneath the plasma membrane. This is Small proline-rich protein 2I (Sprr2i) from Mus musculus (Mouse).